A 394-amino-acid polypeptide reads, in one-letter code: Elongation factor Tu (394 aa).

In terms of domain architecture, tr-type G spans 10-204 (KPHVNIGTIG…AVDSYIPQPV (195 aa)). Positions 19–26 (GHVDHGKT) are G1. Residue 19 to 26 (GHVDHGKT) participates in GTP binding. Position 26 (threonine 26) interacts with Mg(2+). Positions 60 to 64 (GITIS) are G2. The interval 81-84 (DCPG) is G3. Residues 81 to 85 (DCPGH) and 136 to 139 (NKVD) each bind GTP. Residues 136–139 (NKVD) are G4. Residues 174–176 (SAL) form a G5 region.

Belongs to the TRAFAC class translation factor GTPase superfamily. Classic translation factor GTPase family. EF-Tu/EF-1A subfamily. In terms of assembly, monomer.

Its subcellular location is the cytoplasm. The enzyme catalyses GTP + H2O = GDP + phosphate + H(+). Functionally, GTP hydrolase that promotes the GTP-dependent binding of aminoacyl-tRNA to the A-site of ribosomes during protein biosynthesis. The chain is Elongation factor Tu from Rickettsia parkeri.